We begin with the raw amino-acid sequence, 654 residues long: Pyoverdine export ATP-binding/permease protein PvdT (654 aa).

The ABC transporter domain maps to 6-245 (IELCDIRKAY…QPEQLQANDL (240 aa)). Residue 43 to 50 (GASGSGKS) coordinates ATP. The next 4 membrane-spanning stretches (helical) occupy residues 282–302 (ALTL…LAVG), 529–549 (LSLM…IGVM), 596–616 (IVIA…VAFA), and 617–637 (LPAI…FGFM).

Belongs to the ABC transporter superfamily. Macrolide exporter (TC 3.A.1.122) family. In terms of assembly, part of the tripartite efflux system PvdRT-OpmQ, which is composed of an inner membrane component with both ATPase and permease domains, PvdT, a periplasmic membrane fusion protein, PvdR, and an outer membrane component, OpmQ.

The protein localises to the cell inner membrane. Functionally, part of the tripartite efflux system PvdRT-OpmQ required for the secretion into the extracellular milieu of the siderophore pyoverdine (PVD), which is involved in iron acquisition. This subunit binds PVD and drives its secretion by hydrolyzing ATP. The system is responsible for export of newly synthesized PVD after the final steps of biosynthesis have taken place in the periplasm. It is also responsible for recycling of PVD after internalization of ferri-PVD into the periplasm by the outer-membrane receptor FpvA and release of iron from PVD, thus making PVD available for new cycles of iron uptake. The protein is Pyoverdine export ATP-binding/permease protein PvdT of Pseudomonas entomophila (strain L48).